Consider the following 68-residue polypeptide: DNA-directed RNA polymerase subunit Rpo10 (68 aa).

The Zn(2+) site is built by Cys7, Cys10, Cys44, and Cys45.

The protein belongs to the archaeal Rpo10/eukaryotic RPB10 RNA polymerase subunit family. As to quaternary structure, part of the RNA polymerase complex. Zn(2+) is required as a cofactor.

It is found in the cytoplasm. The catalysed reaction is RNA(n) + a ribonucleoside 5'-triphosphate = RNA(n+1) + diphosphate. In terms of biological role, DNA-dependent RNA polymerase (RNAP) catalyzes the transcription of DNA into RNA using the four ribonucleoside triphosphates as substrates. The protein is DNA-directed RNA polymerase subunit Rpo10 of Methanococcus maripaludis (strain C7 / ATCC BAA-1331).